The sequence spans 20 residues: Cupiennin-6f (20 aa).

Expressed by the venom gland.

The protein resides in the secreted. In Cupiennius salei (American wandering spider), this protein is Cupiennin-6f.